We begin with the raw amino-acid sequence, 60 residues long: Short neurotoxin 1 (60 aa).

Disulfide bonds link Cys3/Cys22, Cys17/Cys39, Cys41/Cys52, and Cys53/Cys58.

The protein belongs to the three-finger toxin family. Short-chain subfamily. Type I alpha-neurotoxin sub-subfamily. Expressed by the venom gland.

It is found in the secreted. Functionally, binds to muscle nicotinic acetylcholine receptor (nAChR) and inhibit acetylcholine from binding to the receptor, thereby impairing neuromuscular transmission. This Dendroaspis polylepis polylepis (Black mamba) protein is Short neurotoxin 1.